A 538-amino-acid chain; its full sequence is GSY2-interacting protein PIG2 (538 aa).

Residues S162, S196, S296, and S304 each carry the phosphoserine modification. The region spanning L384–D508 is the CBM21 domain.

Interacts with glycogen synthase 2 (GSY2); possibly also interacts with phosphatase 1 (GLC7). The chain is GSY2-interacting protein PIG2 (PIG2) from Saccharomyces cerevisiae (strain ATCC 204508 / S288c) (Baker's yeast).